The primary structure comprises 439 residues: Probable E3 ubiquitin-protein ligase makorin-1 (439 aa).

3 C3H1-type zinc fingers span residues tryptophan 18–serine 45, lysine 48–proline 74, and glutamate 163–valine 190. The interval lysine 73–serine 118 is disordered. The interval cysteine 191–histidine 218 is makorin-type Cys-His. The RING-type zinc-finger motif lies at cysteine 236–arginine 290. The C3H1-type 4 zinc-finger motif lies at glycine 319–proline 348. The interval leucine 352–threonine 371 is disordered. Residues glutamine 358–asparagine 368 show a composition bias toward low complexity.

The enzyme catalyses S-ubiquitinyl-[E2 ubiquitin-conjugating enzyme]-L-cysteine + [acceptor protein]-L-lysine = [E2 ubiquitin-conjugating enzyme]-L-cysteine + N(6)-ubiquitinyl-[acceptor protein]-L-lysine.. The protein operates within protein modification; protein ubiquitination. In terms of biological role, E3 ubiquitin ligase catalyzing the covalent attachment of ubiquitin moieties onto substrate proteins. The polypeptide is Probable E3 ubiquitin-protein ligase makorin-1 (Danio rerio (Zebrafish)).